Consider the following 7639-residue polypeptide: Nonribosomal peptide synthetase 4 (7639 aa).

The tract at residues Trp-244–Phe-636 is adenylation 1. The Carrier 1 domain maps to Thr-776 to Glu-852. An O-(pantetheine 4'-phosphoryl)serine modification is found at Ser-813. An epimerization 1 region spans residues Phe-865–Ser-1295. The interval Val-1337 to Ile-1767 is condensation 1. An adenylation 2 region spans residues Phe-1786 to Leu-2181. The Carrier 2 domain occupies Ala-2313 to Ser-2389. Ser-2350 is modified (O-(pantetheine 4'-phosphoryl)serine). A condensation 2 region spans residues Val-2426 to Leu-2852. The interval Gln-2878 to Ile-3269 is adenylation 3. The 77-residue stretch at Arg-3403–Glu-3479 folds into the Carrier 3 domain. Ser-3440 is subject to O-(pantetheine 4'-phosphoryl)serine. Residues Ala-3491–Gln-3928 are epimerization 2. The condensation 3 stretch occupies residues Glu-3961 to Thr-4389. Residues Phe-4407–Leu-4810 form an adenylation 4 region. The Carrier 4 domain maps to Ala-4944–Glu-5020. Position 4981 is an O-(pantetheine 4'-phosphoryl)serine (Ser-4981). A condensation 4 region spans residues Gln-5058–Met-5478. Residues Phe-5498–Leu-5900 are adenylation 5. One can recognise a Carrier 5 domain in the interval Thr-6039–Gly-6115. Residue Ser-6076 is modified to O-(pantetheine 4'-phosphoryl)serine. Positions Phe-6133–Leu-6567 are epimerization 3. A condensation 5 region spans residues Val-6607–Gln-7032. In terms of domain architecture, Carrier 6 spans Arg-7088–Ser-7164. An O-(pantetheine 4'-phosphoryl)serine modification is found at Ser-7125. The tract at residues Leu-7254–Arg-7603 is condensation 6.

The protein belongs to the NRP synthetase family.

It carries out the reaction D-allo-threonine + D-leucine + D-alanine + L-proline + 2 L-leucine + A = fusahexin + AH2 + 6 H2O. Its pathway is secondary metabolite biosynthesis. Functionally, nonribosomal peptide synthetase; part of the gene cluster that mediates the biosynthesis of the fusahexin, a cyclic hydrophobic hexapeptide with the amino acid sequence cyclo-(D-Ala-L-Leu-D-allo-Thr-L-Pro-D-Leu-L-Leu) that plays an important role in cell surface hydrophobicity. Fusahexin might also play a role in virulence, sensitivity to osmotic stress and oxidative stress. NRPS4 is the only enzyme within the cluster and its 5 catalytic modules are sufficient to produce fusahexin. The modules 1 to 4 incorporate respectively D-alanine, L-leucine, D-allo-threonine, and L-proline, which is supported by the presence of epimerase domains in modules 1 and 3, which incorporate D-amino acids. The terminal module is responsible for incorporation of the two adjacent leucine units, where the epimerase domain is only used to convert the first unit to D-leucine. The terminal condensation domain (Ct) is involved in cyclization with D-alanine and thereby releasing of fusahexin. The protein is Nonribosomal peptide synthetase 4 of Gibberella zeae (strain ATCC MYA-4620 / CBS 123657 / FGSC 9075 / NRRL 31084 / PH-1) (Wheat head blight fungus).